The chain runs to 988 residues: Ubiquitin carboxyl-terminal hydrolase 36 (988 aa).

The segment at 16–55 (PTLRTDNNGARKQAEHPNNQSHHNHPHPTSNPNELPKPKR) is disordered. The span at 31-48 (HPNNQSHHNHPHPTSNPN) shows a compositional bias: low complexity. One can recognise a USP domain in the interval 78 to 386 (TGMINVGNTC…NAYIMFFELD (309 aa)). Cys-87 acts as the Nucleophile in catalysis. Residue His-345 is the Proton acceptor of the active site. Disordered regions lie at residues 393 to 422 (PPAN…SPSP), 483 to 782 (ATSA…VTSN), and 868 to 988 (EQRQ…QQQT). 2 stretches are compositionally biased toward low complexity: residues 408-422 (STTP…SPSP) and 490-509 (NGNK…KSIN). Phosphoserine occurs at positions 419 and 421. Residues 532-544 (TTAQLPSMPNMTE) show a composition bias toward polar residues. Residues Thr-561 and Thr-565 each carry the phosphothreonine modification. Ser-575 and Ser-577 each carry phosphoserine. Residues 592 to 601 (EGEDFSESDQ) show a composition bias toward acidic residues. Polar residues predominate over residues 602-631 (ESGQTNGHSKTNGSLTNGSASSSVHVNNSK). Residues 632–649 (QKTDAIDEIFKSLKKSAD) are compositionally biased toward basic and acidic residues. The residue at position 650 (Ser-650) is a Phosphoserine. The span at 650 to 659 (SEEDDDEEEP) shows a compositional bias: acidic residues. Positions 669-679 (PQKQSQSQSKA) are enriched in low complexity. The segment covering 680-689 (PPSPKTPPSP) has biased composition (pro residues). Ser-682 is modified (phosphoserine). Phosphothreonine is present on Thr-685. Ser-688 is modified (phosphoserine). Positions 707 to 717 (VDAIDDDDDAV) are enriched in acidic residues. The residue at position 728 (Thr-728) is a Phosphothreonine. Over residues 735–747 (NPFSSSKPSTDSP) the composition is skewed to polar residues. Ser-746 carries the post-translational modification Phosphoserine. The residue at position 749 (Thr-749) is a Phosphothreonine. Residues 762 to 782 (ALKSHQQPRVGNGYQSNVTSN) are compositionally biased toward polar residues. 2 stretches are compositionally biased toward low complexity: residues 892-903 (SGSAKGNNASNS) and 930-943 (RFHN…FQQR).

This sequence belongs to the peptidase C19 family. Interacts with atms/PAF1, but not with CycT.

It is found in the nucleus. Its subcellular location is the nucleolus. The enzyme catalyses Thiol-dependent hydrolysis of ester, thioester, amide, peptide and isopeptide bonds formed by the C-terminal Gly of ubiquitin (a 76-residue protein attached to proteins as an intracellular targeting signal).. Functionally, required for maintaining multiple types of adult stem cells, including male and female germline, epithelial follicle cell and intestinal stem cells. May function as a transcriptional repressor by continually deubiquiting histone H2B at the promoters of genes critical for cellular differentiation, thereby preventing histone H3 'Lys-4' trimethylation (H3K4). Controls selective autophagy activation by ubiquitinated proteins. This Drosophila simulans (Fruit fly) protein is Ubiquitin carboxyl-terminal hydrolase 36 (Usp36).